Consider the following 107-residue polypeptide: Putative double-stranded DNA mimic protein Spro_2690 (107 aa).

This sequence belongs to the putative dsDNA mimic protein family.

May act as a double-stranded DNA (dsDNA) mimic. Probably regulates the activity of a dsDNA-binding protein. In Serratia proteamaculans (strain 568), this protein is Putative double-stranded DNA mimic protein Spro_2690.